Here is a 431-residue protein sequence, read N- to C-terminus: Enolase (431 aa).

Gln-166 provides a ligand contact to (2R)-2-phosphoglycerate. The active-site Proton donor is Glu-208. Mg(2+)-binding residues include Asp-245, Glu-288, and Asp-315. Positions 340, 369, 370, and 391 each coordinate (2R)-2-phosphoglycerate. Residue Lys-340 is the Proton acceptor of the active site.

This sequence belongs to the enolase family. It depends on Mg(2+) as a cofactor.

The protein resides in the cytoplasm. The protein localises to the secreted. It is found in the cell surface. It catalyses the reaction (2R)-2-phosphoglycerate = phosphoenolpyruvate + H2O. It functions in the pathway carbohydrate degradation; glycolysis; pyruvate from D-glyceraldehyde 3-phosphate: step 4/5. In terms of biological role, catalyzes the reversible conversion of 2-phosphoglycerate (2-PG) into phosphoenolpyruvate (PEP). It is essential for the degradation of carbohydrates via glycolysis. This chain is Enolase, found in Clostridium perfringens (strain ATCC 13124 / DSM 756 / JCM 1290 / NCIMB 6125 / NCTC 8237 / Type A).